A 213-amino-acid polypeptide reads, in one-letter code: Kiwellin (213 aa).

An N-terminal signal peptide occupies residues 1-24 (MAQLALLLLSLFLTLISLAPPGAS). Disulfide bonds link Cys28-Cys60, Cys32-Cys44, and Cys38-Cys49. Pro65 and Pro67 each carry 4-hydroxyproline. 4 cysteine pairs are disulfide-bonded: Cys72/Cys90, Cys80/Cys172, Cys119/Cys144, and Cys166/Cys172. Residues 91-121 (SPPVTSSTPAKLTNNDFSEGGDDGGPSECDE) form a disordered region. Polar residues predominate over residues 93 to 107 (PVTSSTPAKLTNNDF).

Belongs to the kiwellin family. In terms of processing, undergoes proteolytic cleavage by actinidin to produce kissper and KiTH. Three forms of KiTH are produced by cleavage at different sites, the main form produced in vivo is KiTH-1.

Its subcellular location is the secreted. Functionally, pH-dependent, voltage-gated and anion-selective pore-forming peptide. This Actinidia deliciosa (Kiwi) protein is Kiwellin.